A 224-amino-acid chain; its full sequence is N-terminal Xaa-Pro-Lys N-methyltransferase 1 (224 aa).

S-adenosyl-L-methionine is bound by residues Gly70, Arg75, Asp92 to Thr94, Leu120 to Gln121, and Gln136.

Belongs to the methyltransferase superfamily. NTM1 family.

The protein resides in the nucleus. It catalyses the reaction N-terminal L-alanyl-L-prolyl-L-lysyl-[protein] + 3 S-adenosyl-L-methionine = N-terminal N,N,N-trimethyl-L-alanyl-L-prolyl-L-lysyl-[protein] + 3 S-adenosyl-L-homocysteine + 3 H(+). The enzyme catalyses N-terminal L-seryl-L-prolyl-L-lysyl-[protein] + 3 S-adenosyl-L-methionine = N-terminal N,N,N-trimethyl-L-seryl-L-prolyl-L-lysyl-[protein] + 3 S-adenosyl-L-homocysteine + 3 H(+). The catalysed reaction is N-terminal L-prolyl-L-prolyl-L-lysyl-[protein] + 2 S-adenosyl-L-methionine = N-terminal N,N-dimethyl-L-prolyl-L-prolyl-L-lysyl-[protein] + 2 S-adenosyl-L-homocysteine + 2 H(+). Its function is as follows. Distributive alpha-N-methyltransferase that methylates the N-terminus of target proteins containing the N-terminal motif [Ala/Gly/Pro/Ser]-Pro-Lys when the initiator Met is cleaved. Specifically catalyzes mono-, di- or tri-methylation of the exposed alpha-amino group of the Ala, Gly or Ser residue in the [Ala/Gly/Ser]-Pro-Lys motif and mono- or di-methylation of Pro in the Pro-Pro-Lys motif. Required during mitosis for normal bipolar spindle formation and chromosome segregation via its action on target proteins. This Xenopus tropicalis (Western clawed frog) protein is N-terminal Xaa-Pro-Lys N-methyltransferase 1 (ntmt1).